We begin with the raw amino-acid sequence, 261 residues long: Indole-3-glycerol phosphate synthase (261 aa).

It belongs to the TrpC family.

It carries out the reaction 1-(2-carboxyphenylamino)-1-deoxy-D-ribulose 5-phosphate + H(+) = (1S,2R)-1-C-(indol-3-yl)glycerol 3-phosphate + CO2 + H2O. Its pathway is amino-acid biosynthesis; L-tryptophan biosynthesis; L-tryptophan from chorismate: step 4/5. This Campylobacter concisus (strain 13826) protein is Indole-3-glycerol phosphate synthase.